A 333-amino-acid chain; its full sequence is 6-phosphogluconolactonase (333 aa).

The protein belongs to the cycloisomerase 2 family.

The catalysed reaction is 6-phospho-D-glucono-1,5-lactone + H2O = 6-phospho-D-gluconate + H(+). Its pathway is carbohydrate degradation; pentose phosphate pathway; D-ribulose 5-phosphate from D-glucose 6-phosphate (oxidative stage): step 2/3. In terms of biological role, catalyzes the hydrolysis of 6-phosphogluconolactone to 6-phosphogluconate. The protein is 6-phosphogluconolactonase of Buchnera aphidicola subsp. Schizaphis graminum (strain Sg).